The following is a 214-amino-acid chain: Thiamine-phosphate synthase (214 aa).

Residues 37-41 (QYREK) and Asn73 each bind 4-amino-2-methyl-5-(diphosphooxymethyl)pyrimidine. Mg(2+)-binding residues include Asp74 and Asp93. Ser112 is a 4-amino-2-methyl-5-(diphosphooxymethyl)pyrimidine binding site. Position 139–141 (139–141 (TIS)) interacts with 2-[(2R,5Z)-2-carboxy-4-methylthiazol-5(2H)-ylidene]ethyl phosphate. Lys142 serves as a coordination point for 4-amino-2-methyl-5-(diphosphooxymethyl)pyrimidine. 2-[(2R,5Z)-2-carboxy-4-methylthiazol-5(2H)-ylidene]ethyl phosphate is bound by residues Gly171 and 191-192 (IS).

This sequence belongs to the thiamine-phosphate synthase family. The cofactor is Mg(2+).

The enzyme catalyses 2-[(2R,5Z)-2-carboxy-4-methylthiazol-5(2H)-ylidene]ethyl phosphate + 4-amino-2-methyl-5-(diphosphooxymethyl)pyrimidine + 2 H(+) = thiamine phosphate + CO2 + diphosphate. It catalyses the reaction 2-(2-carboxy-4-methylthiazol-5-yl)ethyl phosphate + 4-amino-2-methyl-5-(diphosphooxymethyl)pyrimidine + 2 H(+) = thiamine phosphate + CO2 + diphosphate. The catalysed reaction is 4-methyl-5-(2-phosphooxyethyl)-thiazole + 4-amino-2-methyl-5-(diphosphooxymethyl)pyrimidine + H(+) = thiamine phosphate + diphosphate. The protein operates within cofactor biosynthesis; thiamine diphosphate biosynthesis; thiamine phosphate from 4-amino-2-methyl-5-diphosphomethylpyrimidine and 4-methyl-5-(2-phosphoethyl)-thiazole: step 1/1. Condenses 4-methyl-5-(beta-hydroxyethyl)thiazole monophosphate (THZ-P) and 2-methyl-4-amino-5-hydroxymethyl pyrimidine pyrophosphate (HMP-PP) to form thiamine monophosphate (TMP). This chain is Thiamine-phosphate synthase, found in Listeria monocytogenes serotype 4b (strain CLIP80459).